A 436-amino-acid chain; its full sequence is 3-ketoacyl-CoA thiolase (436 aa).

The Acyl-thioester intermediate role is filled by C99. Catalysis depends on proton acceptor residues H392 and C422.

The protein belongs to the thiolase-like superfamily. Thiolase family. Heterotetramer of two alpha chains (FadJ) and two beta chains (FadI).

Its subcellular location is the cytoplasm. It catalyses the reaction an acyl-CoA + acetyl-CoA = a 3-oxoacyl-CoA + CoA. It functions in the pathway lipid metabolism; fatty acid beta-oxidation. In terms of biological role, catalyzes the final step of fatty acid oxidation in which acetyl-CoA is released and the CoA ester of a fatty acid two carbons shorter is formed. In Shigella flexneri, this protein is 3-ketoacyl-CoA thiolase.